The chain runs to 352 residues: Putative GATA transcription factor 22 (352 aa).

A disordered region spans residues 27 to 53 (SLHHHLQQQQQQQQHFHHQASSNPSSL). Low complexity predominate over residues 33 to 53 (QQQQQQQQHFHHQASSNPSSL). The Nuclear localization signal signature appears at 112–119 (PKKETRLK). Residues 163–189 (AIITTSDSSKQHTNNDQSSNLSNSERQ) form a disordered region. Residues 165–189 (ITTSDSSKQHTNNDQSSNLSNSERQ) are compositionally biased toward polar residues. A GATA-type zinc finger spans residues 195–249 (DCVIRICSDCNTTKTPLWRSGPRGPKSLCNACGIRQRKARRAAMATATATAVSGV).

This sequence belongs to the type IV zinc-finger family. Class B subfamily. As to quaternary structure, forms heterodimers with GATA18. In terms of tissue distribution, expressed predominantly in leaves, and barely in stems, flowers and siliques.

It is found in the nucleus. Its function is as follows. Transcriptional regulator that specifically binds 5'-GATA-3' or 5'-GAT-3' motifs within gene promoters. Involved in the modulation of chloroplast development, growth and division in a cytokinin-dependent manner. Repressor of the gibberellic acid (GA) signaling pathway that regulates flowering and modulates greening, in a SOC1-dependent manner. Prevents the accumulation of SOC1 during flowering. Promotes chlorophyll biosynthesis throughout the plant, by regulating chlorophyll biosynthetic genes (e.g. HEMA1 and GUN4) and chloroplast localized glutamate synthase (e.g. GLU1). Involved in the regulation of sugar-sensing genes (e.g. HXK1, HXK2, STP13 and PLT6). Regulator of germination, senescence, elongation growth and flowering time. Influences also leaf starch content. This Arabidopsis thaliana (Mouse-ear cress) protein is Putative GATA transcription factor 22.